Reading from the N-terminus, the 87-residue chain is Small ribosomal subunit protein uS17 (87 aa).

It belongs to the universal ribosomal protein uS17 family. In terms of assembly, part of the 30S ribosomal subunit.

In terms of biological role, one of the primary rRNA binding proteins, it binds specifically to the 5'-end of 16S ribosomal RNA. This is Small ribosomal subunit protein uS17 from Chromobacterium violaceum (strain ATCC 12472 / DSM 30191 / JCM 1249 / CCUG 213 / NBRC 12614 / NCIMB 9131 / NCTC 9757 / MK).